Here is a 265-residue protein sequence, read N- to C-terminus: Mlc titration factor A (265 aa).

Residues histidine 111, histidine 148, histidine 152, and glutamate 211 each contribute to the Zn(2+) site.

The protein belongs to the MtfA family. In terms of assembly, interacts with Mlc. Zn(2+) serves as cofactor.

It is found in the cytoplasm. Involved in the modulation of the activity of the glucose-phosphotransferase system (glucose-PTS). Interacts with the transcriptional repressor Mlc, preventing its interaction with DNA and leading to the modulation of expression of genes regulated by Mlc, including ptsG, which encodes the PTS system glucose-specific EIICB component. Its function is as follows. Shows zinc-dependent metallopeptidase activity. This is Mlc titration factor A from Escherichia fergusonii.